The chain runs to 263 residues: Killer cell lectin-like receptor 4 (263 aa).

At 1 to 44 (MTEQEDTFSAVRFHKSSGLQNEMRLKETRKPEKARLRVCSVPWQ) the chain is on the cytoplasmic side. Residues 45 to 65 (LIVIALGILISLRLVTVAVLM) form a helical; Signal-anchor for type II membrane protein membrane-spanning segment. Residues 66-263 (TNIFQYGQQK…CGKRLDKFPH (198 aa)) are Extracellular-facing. 2 N-linked (GlcNAc...) asparagine glycosylation sites follow: asparagine 87 and asparagine 104. A C-type lectin domain is found at 139 to 258 (GVKVYWFCYG…SFICICGKRL (120 aa)). Cystine bridges form between cysteine 146/cysteine 151, cysteine 164/cysteine 252, cysteine 168/cysteine 254, and cysteine 233/cysteine 246. Residues asparagine 170 and asparagine 222 are each glycosylated (N-linked (GlcNAc...) asparagine).

In terms of assembly, homodimer; disulfide-linked. Interacts with the adapter protein TYROBP/DAP12; the interaction leads to natural killer cell activation.

The protein resides in the cell membrane. Functionally, receptor on natural killer (NK) cells for class I MHC. In Mus musculus (Mouse), this protein is Killer cell lectin-like receptor 4 (Klra4).